Consider the following 432-residue polypeptide: Transcriptional adapter 3 (432 aa).

A coiled-coil region spans residues 40 to 69 (IEELDTLQLELETLLSSASRRLRVLEAETQ). Disordered stretches follow at residues 88–127 (KEHELGTPIKHSKPKKQKLDGKGSHASGPGPGRPKSRNMQ) and 275–313 (SPVEDSPIPEISGKESGTDGASTSPRSQNKPFSAPHTKS). Over residues 293–305 (DGASTSPRSQNKP) the composition is skewed to polar residues. Residues 367 to 407 (LLRLAKEEMNRQELRQRVRMADNEVMDAFRKIMAARQKKRT) are a coiled coil.

This sequence belongs to the NGG1 family.

The protein resides in the nucleus. Functionally, functions as a component of the PCAF complex. The PCAF complex is capable of efficiently acetylating histones in a nucleosomal context. The chain is Transcriptional adapter 3 (tada3) from Xenopus tropicalis (Western clawed frog).